A 69-amino-acid chain; its full sequence is MSVLTPLLLRGLTGSARRLPVPRAKIHSLPPEGKLGIMELAVGLTSCFVTFLLPAGWILSHLETYRRPE.

The N-terminal 25 residues, Met1–Lys25, are a transit peptide targeting the mitochondrion. An SIFI-degron motif is present at residues Ser2–Leu19. Residues Ile26–Gly36 lie on the Mitochondrial matrix side of the membrane. Residues Ile37–Ser60 form a helical membrane-spanning segment. Over His61 to Glu69 the chain is Mitochondrial intermembrane.

Belongs to the cytochrome c oxidase VIII family. As to quaternary structure, component of the cytochrome c oxidase (complex IV, CIV), a multisubunit enzyme composed of 14 subunits. The complex is composed of a catalytic core of 3 subunits MT-CO1, MT-CO2 and MT-CO3, encoded in the mitochondrial DNA, and 11 supernumerary subunits COX4I1 (or COX4I2), COX5A, COX5B, COX6A1 (or COX6A2), COX6B1 (or COX6B2), COX6C, COX7A2 (or COX7A1), COX7B, COX7C, COX8A and NDUFA4, which are encoded in the nuclear genome. The complex exists as a monomer or a dimer and forms supercomplexes (SCs) in the inner mitochondrial membrane with NADH-ubiquinone oxidoreductase (complex I, CI) and ubiquinol-cytochrome c oxidoreductase (cytochrome b-c1 complex, complex III, CIII), resulting in different assemblies (supercomplex SCI(1)III(2)IV(1) and megacomplex MCI(2)III(2)IV(2)). In response to mitochondrial stress, the precursor protein is ubiquitinated by the SIFI complex in the cytoplasm before mitochondrial import, leading to its degradation. Within the SIFI complex, UBR4 initiates ubiquitin chain that are further elongated or branched by KCMF1. Widely expressed.

The protein localises to the mitochondrion inner membrane. The protein operates within energy metabolism; oxidative phosphorylation. Its function is as follows. Component of the cytochrome c oxidase, the last enzyme in the mitochondrial electron transport chain which drives oxidative phosphorylation. The respiratory chain contains 3 multisubunit complexes succinate dehydrogenase (complex II, CII), ubiquinol-cytochrome c oxidoreductase (cytochrome b-c1 complex, complex III, CIII) and cytochrome c oxidase (complex IV, CIV), that cooperate to transfer electrons derived from NADH and succinate to molecular oxygen, creating an electrochemical gradient over the inner membrane that drives transmembrane transport and the ATP synthase. Cytochrome c oxidase is the component of the respiratory chain that catalyzes the reduction of oxygen to water. Electrons originating from reduced cytochrome c in the intermembrane space (IMS) are transferred via the dinuclear copper A center (CU(A)) of subunit 2 and heme A of subunit 1 to the active site in subunit 1, a binuclear center (BNC) formed by heme A3 and copper B (CU(B)). The BNC reduces molecular oxygen to 2 water molecules using 4 electrons from cytochrome c in the IMS and 4 protons from the mitochondrial matrix. This Homo sapiens (Human) protein is Cytochrome c oxidase subunit 8A, mitochondrial (COX8A).